A 154-amino-acid chain; its full sequence is Putative nuclear shuttle protein (154 aa).

Belongs to the nanoviridae nuclear shuttle protein family.

It is found in the host nucleus. The protein resides in the host cytoplasm. Putative nuclear shuttle protein. This Musa (BBTV) protein is Putative nuclear shuttle protein (DNA-N).